Consider the following 319-residue polypeptide: ATP-dependent 6-phosphofructokinase (319 aa).

Gly-11 is an ATP binding site. Position 21–25 (21–25) interacts with ADP; it reads RAVVR. ATP contacts are provided by residues 72 to 73 and 102 to 105; these read RC and GDGS. Asp-103 contributes to the Mg(2+) binding site. 125-127 lines the substrate pocket; sequence TID. Catalysis depends on Asp-127, which acts as the Proton acceptor. Residue Arg-154 coordinates ADP. Residues Arg-162 and 169–171 each bind substrate; that span reads MGR. ADP is bound by residues 185–187, Arg-211, and 213–215; these read GAE and KLH. Residues Glu-222, Arg-243, and 249-252 contribute to the substrate site; that span reads HIQR.

It belongs to the phosphofructokinase type A (PFKA) family. ATP-dependent PFK group I subfamily. Prokaryotic clade 'B1' sub-subfamily. In terms of assembly, homotetramer. Mg(2+) serves as cofactor.

Its subcellular location is the cytoplasm. It carries out the reaction beta-D-fructose 6-phosphate + ATP = beta-D-fructose 1,6-bisphosphate + ADP + H(+). Its pathway is carbohydrate degradation; glycolysis; D-glyceraldehyde 3-phosphate and glycerone phosphate from D-glucose: step 3/4. Its activity is regulated as follows. Allosterically activated by ADP and other diphosphonucleosides, and allosterically inhibited by phosphoenolpyruvate. Functionally, catalyzes the phosphorylation of D-fructose 6-phosphate to fructose 1,6-bisphosphate by ATP, the first committing step of glycolysis. The polypeptide is ATP-dependent 6-phosphofructokinase (Alkaliphilus metalliredigens (strain QYMF)).